The following is a 341-amino-acid chain: Phosphate acyltransferase (341 aa).

The protein belongs to the PlsX family. In terms of assembly, homodimer. Probably interacts with PlsY.

The protein localises to the cytoplasm. The enzyme catalyses a fatty acyl-[ACP] + phosphate = an acyl phosphate + holo-[ACP]. It participates in lipid metabolism; phospholipid metabolism. Catalyzes the reversible formation of acyl-phosphate (acyl-PO(4)) from acyl-[acyl-carrier-protein] (acyl-ACP). This enzyme utilizes acyl-ACP as fatty acyl donor, but not acyl-CoA. This is Phosphate acyltransferase from Nostoc sp. (strain PCC 7120 / SAG 25.82 / UTEX 2576).